The chain runs to 81 residues: uncharacterized protein (81 aa).

2 helical membrane-spanning segments follow: residues 4-24 (IFKM…FNYT) and 61-81 (NIYT…LHII).

Its subcellular location is the cell membrane. This is an uncharacterized protein from Bacillus subtilis (strain 168).